The following is an 807-amino-acid chain: Glycerol-3-phosphate acyltransferase (807 aa).

Positions 309 to 314 (CHRSHM) match the HXXXXD motif motif.

This sequence belongs to the GPAT/DAPAT family.

It localises to the cell inner membrane. It carries out the reaction sn-glycerol 3-phosphate + an acyl-CoA = a 1-acyl-sn-glycero-3-phosphate + CoA. It functions in the pathway phospholipid metabolism; CDP-diacylglycerol biosynthesis; CDP-diacylglycerol from sn-glycerol 3-phosphate: step 1/3. The chain is Glycerol-3-phosphate acyltransferase from Aeromonas hydrophila subsp. hydrophila (strain ATCC 7966 / DSM 30187 / BCRC 13018 / CCUG 14551 / JCM 1027 / KCTC 2358 / NCIMB 9240 / NCTC 8049).